The primary structure comprises 773 residues: Probable serine/threonine-protein kinase MARK-C (773 aa).

A compositionally biased stretch (polar residues) spans 1–27 (MESNKSSSHGDVSTSPSFLNNHHQFNN). A disordered region spans residues 1-32 (MESNKSSSHGDVSTSPSFLNNHHQFNNGGDII). In terms of domain architecture, Protein kinase spans 46-300 (YEVGKTLGNG…IQELKNHPWT (255 aa)). ATP-binding positions include 52–60 (LGNGTFGKV) and Lys75. Asp171 (proton acceptor) is an active-site residue. Residues 362–390 (RYASKEVENLKSKLELLSKRKKSFSDKRN) adopt a coiled-coil conformation. 3 disordered regions span residues 382-445 (KKSF…SQGS), 462-487 (DNDI…NKDI), and 558-588 (YSIQ…TNLR). Low complexity predominate over residues 405-443 (DLSSNNNNNQQQQNSPPSKTNSSSTSSSNRESNNNSPSQ). Positions 445–474 (SIKEISLDELDNHIEQLDNDIENSDNNKSS) form a coiled coil. Residues 468-478 (SDNNKSSSLTR) show a composition bias toward polar residues. The span at 561–573 (QQQQLQQQQQQQQ) shows a compositional bias: low complexity. One can recognise a KA1 domain in the interval 724-773 (CFDEDNSVKFQIEIVKICNLDLTGIQLKRLSGDTWKYKDICTELVESMKL).

It belongs to the protein kinase superfamily. CAMK Ser/Thr protein kinase family. SNF1 subfamily.

The catalysed reaction is L-seryl-[protein] + ATP = O-phospho-L-seryl-[protein] + ADP + H(+). It catalyses the reaction L-threonyl-[protein] + ATP = O-phospho-L-threonyl-[protein] + ADP + H(+). This Dictyostelium discoideum (Social amoeba) protein is Probable serine/threonine-protein kinase MARK-C (mrkC).